A 125-amino-acid chain; its full sequence is uncharacterized protein (125 aa).

Transmembrane regions (helical) follow at residues 28–48 (VFIT…SQFC) and 54–74 (FFLP…LFFF).

It localises to the membrane. This is an uncharacterized protein from Saccharomyces cerevisiae (strain ATCC 204508 / S288c) (Baker's yeast).